The following is a 150-amino-acid chain: Protein Turandot X1/X2 (150 aa).

The signal sequence occupies residues 1-22; sequence MRLYIGSLLICVLLGIVPFATA. The segment at 127-150 is disordered; the sequence is REEGQSNHANSPTTSPSRIQKMTK. The span at 132-150 shows a compositional bias: polar residues; that stretch reads SNHANSPTTSPSRIQKMTK.

Belongs to the Turandot family.

Its subcellular location is the secreted. Its function is as follows. A humoral factor that may play a role in stress tolerance. The polypeptide is Protein Turandot X1/X2 (Drosophila sechellia (Fruit fly)).